The primary structure comprises 487 residues: MIYHDLRDFVAQLEKMGELKRIATEVDPRLEMTEIADRVLRAGGPALLFEHPKGHRVPVLANLFGTVKRVALGMGEDDPARLREVGKLLAYLKEPEPPKGLRDAWDKWPVLKQVLNMAPKEVRSAPCQEMVWEGKDVDLSRLPIQHCWPGDVAPLITWGLTVTRGPHKKRQNLGIYRQQVIGPNKLIMRWLAHRGGALDFREHQQAHPGEAFPVAVALGADPATILGAVTPVPDTLSEYQFAGLLRGAKTEVVRCLGNTLQVPASSEIVLEGVIHPEETALEGPYGDHTGYYNEQETFPVFTVERITMRRDPIYHSTYTGKPPDEPAILGVALNEVFVPLLQKQFPEIVDFYLPPEGCSYRMAVVSMKKAYPGHAKRVMFGVWSFLRQFMYTKFILVTDDDVDVRDWKEVMWALTTRVDPARDTLLVENTPIDYLDFASPVSGLGSKMGIDATNKWPGETQREWGTPITMDAAVKARVDAIWQDLGL.

Asparagine 172 contacts Mn(2+). Prenylated FMN contacts are provided by residues 175 to 177 (IYR), 189 to 191 (RWL), and 194 to 195 (RG). Residue glutamate 238 coordinates Mn(2+). The Proton donor role is filled by aspartate 287.

Belongs to the UbiD family. Homohexamer. The cofactor is prenylated FMN. Mn(2+) is required as a cofactor.

Its subcellular location is the cell membrane. The catalysed reaction is a 4-hydroxy-3-(all-trans-polyprenyl)benzoate + H(+) = a 2-(all-trans-polyprenyl)phenol + CO2. It functions in the pathway cofactor biosynthesis; ubiquinone biosynthesis. Its function is as follows. Catalyzes the decarboxylation of 3-octaprenyl-4-hydroxy benzoate to 2-octaprenylphenol, an intermediate step in ubiquinone biosynthesis. This Thiobacillus denitrificans (strain ATCC 25259 / T1) protein is 3-octaprenyl-4-hydroxybenzoate carboxy-lyase.